We begin with the raw amino-acid sequence, 163 residues long: MLRKISLLLLPVFVAINLVHSSPEIMKNLSNNFGKAMDQCKDELSLPDSVVADLYNFWKDDYVMTDRLAGCAINCLATKLDVVDPDGNLHHGNAKDFAMKHGADETMAQQLVDIIHGCEKSAPPNDDKCMKTIDVAMCFKKEIHKLNWVPNMDLVIGEVLAEV.

The N-terminal stretch at 1-21 (MLRKISLLLLPVFVAINLVHS) is a signal peptide. 3 disulfides stabilise this stretch: Cys40-Cys75, Cys71-Cys129, and Cys118-Cys138.

Belongs to the PBP/GOBP family. As to quaternary structure, homodimer. As to expression, antenna.

This major soluble protein in olfactory sensilla of male moths might serve to solubilize the extremely hydrophobic pheromone molecules and to transport pheromone through the aqueous lymph to receptors located on olfactory cilia. The polypeptide is Pheromone-binding protein (Antheraea polyphemus (Polyphemus moth)).